Here is a 544-residue protein sequence, read N- to C-terminus: Chaperonin GroEL (544 aa).

ATP contacts are provided by residues 30-33, lysine 51, 87-91, glycine 415, 479-481, and aspartate 495; these read TLGP, DGTTT, and NAA.

Belongs to the chaperonin (HSP60) family. In terms of assembly, forms a cylinder of 14 subunits composed of two heptameric rings stacked back-to-back. Interacts with the co-chaperonin GroES.

The protein resides in the cytoplasm. The enzyme catalyses ATP + H2O + a folded polypeptide = ADP + phosphate + an unfolded polypeptide.. Functionally, together with its co-chaperonin GroES, plays an essential role in assisting protein folding. The GroEL-GroES system forms a nano-cage that allows encapsulation of the non-native substrate proteins and provides a physical environment optimized to promote and accelerate protein folding. This Francisella tularensis subsp. tularensis (strain SCHU S4 / Schu 4) protein is Chaperonin GroEL.